The chain runs to 752 residues: MAILSPRKTALALAVALSCAWQSPAFAHGGEAHMVPMDKTLQDFGADVQWDDYAQMFTLIKDGAYVKVKPGAKTAIVNGKTLELQVPVVMKDGKAWVSDTFINDVFQSGLDQTFQVEKRPHPLNSLSAAEISAAVAIVKAAADFKPNTRFTEISLREPDKKAVWDFALNGTPVNAPRAADVIMLDGKHVIEAVVDLQNKKVLSWTPIKDAHGMVLLDDFASVQNIINASSEFAEVLKKHGIDDPSKVITTPLTVGYFDGKDGLKQDARLLKVVSYLDVGDGNYWAHPIENLVAVVDLEQKKIIKIEEGPTIPVPMAARPYDGRDRVAPKIKPLDIIEPEGKNYTITGDMIHWQNWDFHLRMNSRVGPILSTVTYNDNGKKRQVMYEGSLGGMIVPYGDPDVGWYFKAYLDSGDYGMGTLTSPIVRGKDAPSNAVLLDETIADYTGTPTTIPRAIAIFERYAGPEYKHQEMGKPNVSTERRELVVRWISTVGNYDYIFDWVFHENGTIGIDAGATGIEAVKGVQAKTMHDPSAKEDTRYGTLIDHNIVGTTHQHIYNFRLDLDVDGENNTLVAMDPEVKPNTAGGPRTSTMQINQYTIDSEQKAAQKFDPGTIRLLSNITKENRMGNPVSYQIIPYAGGTHPVATGAKFAPDEWIYHRLSFMDKQLWVTRYHPTERFPEGKYPNRSIHDTGLGQYAKDDESLDNHDDVVWITTGTTHVARAEEWPIMPTEWAHALLKPWNFFDETPTLGEKKE.

An N-terminal signal peptide occupies residues 1 to 27 (MAILSPRKTALALAVALSCAWQSPAFA). Substrate is bound by residues 408–419 (YLDSGDYGMGTL) and 490–495 (VGNYDY). The active-site Proton acceptor is the D410. Y493 functions as the Schiff-base intermediate with substrate; via topaquinone in the catalytic mechanism. 2',4',5'-topaquinone is present on Y493. Residues H551 and H553 each coordinate Cu cation. Positions 560, 561, 562, 600, 694, 697, 699, and 705 each coordinate Ca(2+). D560 contacts Mn(2+). D562 provides a ligand contact to Mn(2+). D705 provides a ligand contact to Mn(2+). H716 is a Cu cation binding site.

This sequence belongs to the copper/topaquinone oxidase family. Homodimer. It depends on Cu cation as a cofactor. Ca(2+) serves as cofactor. The cofactor is L-topaquinone. Mn(2+) is required as a cofactor. In terms of processing, topaquinone (TPQ) is generated by copper-dependent autoxidation of a specific tyrosyl residue.

The protein resides in the periplasm. It carries out the reaction a primary methyl amine + O2 + H2O = an aldehyde + H2O2 + NH4(+). In terms of biological role, active on tyramine, tryptamine, beta-phenethylamine and dopamine. This Klebsiella michiganensis (strain ATCC 8724 / DSM 4798 / JCM 20051 / NBRC 3318 / NRRL B-199 / KCTC 1686 / BUCSAV 143 / CCM 1901) protein is Primary amine oxidase (maoA).